Here is a 187-residue protein sequence, read N- to C-terminus: uncharacterized protein (187 aa).

Residues 8 to 28 traverse the membrane as a helical segment; sequence FFILLAINFILAAGFVALVLL.

It is found in the membrane. This is an uncharacterized protein from Bacillus subtilis (strain 168).